Here is a 478-residue protein sequence, read N- to C-terminus: Lysosome membrane protein 2 (478 aa).

The Cytoplasmic portion of the chain corresponds to 1–4 (MGRC). The helical transmembrane segment at 5 to 27 (CFYTAGTLSLLLLVTSVTLLVAR) threads the bilayer. Residues 28–433 (VFQKAVDQSI…RLKSMINTTL (406 aa)) lie on the Lumenal side of the membrane. Asparagine 45, asparagine 68, and asparagine 105 each carry an N-linked (GlcNAc...) asparagine glycan. Residues 155–191 (IIEAMLKAYQQKLFVTHTVDELLWGYKDEILSLIHVF) are important for interaction with GBA1. Asparagine 206, asparagine 224, asparagine 249, and asparagine 304 each carry an N-linked (GlcNAc...) asparagine glycan. Disulfide bonds link cysteine 274–cysteine 329 and cysteine 312–cysteine 318. Asparagine 325, asparagine 412, and asparagine 430 each carry an N-linked (GlcNAc...) asparagine glycan. A helical membrane pass occupies residues 434–459 (IITNIPYIIMALGVFFGLVFTWLACK). At 460-478 (GQGSMDEGTADERAPLIRT) the chain is on the cytoplasmic side.

It belongs to the CD36 family. Interacts with GBA1. As to quaternary structure, (Microbial infection) Interacts with enterovirus 71 capsid proteins VP1 and VP2.

It localises to the lysosome membrane. Its function is as follows. Acts as a lysosomal receptor for glucosylceramidase (GBA1) targeting. In terms of biological role, (Microbial infection) Acts as a receptor for enterovirus 71. In Homo sapiens (Human), this protein is Lysosome membrane protein 2 (SCARB2).